Consider the following 72-residue polypeptide: UPF0270 protein YheU (72 aa).

The protein belongs to the UPF0270 family.

The polypeptide is UPF0270 protein YheU (Escherichia coli (strain UTI89 / UPEC)).